A 144-amino-acid polypeptide reads, in one-letter code: Transcription antitermination protein NusB (144 aa).

The protein belongs to the NusB family.

Functionally, involved in transcription antitermination. Required for transcription of ribosomal RNA (rRNA) genes. Binds specifically to the boxA antiterminator sequence of the ribosomal RNA (rrn) operons. This is Transcription antitermination protein NusB from Paraburkholderia xenovorans (strain LB400).